The sequence spans 584 residues: Zinc finger and BTB domain-containing protein 7A (584 aa).

In terms of domain architecture, BTB spans 34–101 (CDVVILVEGR…AYTATLTVST (68 aa)). Positions 220-313 (YGPGPPAERP…EDGDGPDVDG (94 aa)) are disordered. The interval 277–584 (EEEAASLSEA…TDGNFTAGLA (308 aa)) is mediates interaction with KHDRBS1. Over residues 281 to 290 (ASLSEAAPEP) the composition is skewed to low complexity. 2 positions are modified to phosphoserine: Ser337 and Ser341. Residues 349-584 (MDYYLKYFSG…TDGNFTAGLA (236 aa)) are mediates interaction with RELA. Positions 377 to 584 (RAKAFQKCPI…TDGNFTAGLA (208 aa)) are mediates interaction with SMAD4. 2 consecutive C2H2-type zinc fingers follow at residues 382–404 (QKCP…IRTH) and 410–432 (YECN…MRKH). A Glycyl lysine isopeptide (Lys-Gly) (interchain with G-Cter in SUMO2) cross-link involves residue Lys436. The C2H2-type 3 zinc-finger motif lies at 438-460 (YLCQQCGAAFAHNYDLKNHMRVH). Residues 466 to 490 (YQCDSCCKTFVRSDHLHRHLKKDGC) form a C2H2-type 4; atypical zinc finger. The segment at 486–584 (KKDGCNGVPS…TDGNFTAGLA (99 aa)) is disordered. Low complexity predominate over residues 505–527 (GGAPDPSPGATATPGAPAQPSSP). Phosphoserine occurs at positions 511, 525, and 526. Residues 528–540 (DARRNGQEKHFKD) show a composition bias toward basic and acidic residues. A Glycyl lysine isopeptide (Lys-Gly) (interchain with G-Cter in SUMO2) cross-link involves residue Lys539. Position 549 is a phosphoserine (Ser549). The span at 560 to 572 (GAGGGGDSGGGPG) shows a compositional bias: gly residues.

Homodimer. Interacts with BCL6. Interacts with RELA; involved in the control by RELA of the accessibility of target gene promoters. Interacts with AR (via NR LBD domain); the interaction is direct and androgen-dependent. Interacts with NCOR1. Interacts with NCOR2. Interacts with SMAD4; the interaction is direct and stimulated by TGFB1. Interacts with HDAC1. Interacts with SP1; ZBTB7A prevents the binding to GC-rich motifs in promoters and represses the transcriptional activity of SP1. Interacts with the DNA-dependent protein kinase complex/DNA-PKc. Interacts with KHDRBS1; negatively regulates KHDRBS1 splicing activity. Post-translationally, sumoylated. Undergoes sumoylation with SUMO1 that may regulate its transcriptional activity. In terms of tissue distribution, widely expressed. In normal thymus, expressed in medullary epithelial cells and Hassle's corpuscles (at protein level). In tonsil, expressed in squamous epithelium and germinal center lymphocytes (at protein level). Up-regulated in a subset of lymphomas, as well as in a subset of breast, lung, colon, prostate and bladder carcinomas (at protein level). Expressed in adipose tissues.

Its subcellular location is the nucleus. In terms of biological role, transcription factor that represses the transcription of a wide range of genes involved in cell proliferation and differentiation. Directly and specifically binds to the consensus sequence 5'-[GA][CA]GACCCCCCCCC-3' and represses transcription both by regulating the organization of chromatin and through the direct recruitment of transcription factors to gene regulatory regions. Negatively regulates SMAD4 transcriptional activity in the TGF-beta signaling pathway through these two mechanisms. That is, recruits the chromatin regulator HDAC1 to the SMAD4-DNA complex and in parallel prevents the recruitment of the transcriptional activators CREBBP and EP300. Collaborates with transcription factors like RELA to modify the accessibility of gene transcription regulatory regions to secondary transcription factors. Also directly interacts with transcription factors like SP1 to prevent their binding to DNA. Functions as an androgen receptor/AR transcriptional corepressor by recruiting NCOR1 and NCOR2 to the androgen response elements/ARE on target genes. Thereby, negatively regulates androgen receptor signaling and androgen-induced cell proliferation. Involved in the switch between fetal and adult globin expression during erythroid cells maturation. Through its interaction with the NuRD complex regulates chromatin at the fetal globin genes to repress their transcription. Specifically represses the transcription of the tumor suppressor ARF isoform from the CDKN2A gene. Efficiently abrogates E2F1-dependent CDKN2A transactivation. Regulates chondrogenesis through the transcriptional repression of specific genes via a mechanism that also requires histone deacetylation. Regulates cell proliferation through the transcriptional regulation of genes involved in glycolysis. Involved in adipogenesis through the regulation of genes involved in adipocyte differentiation. Plays a key role in the differentiation of lymphoid progenitors into B and T lineages. Promotes differentiation towards the B lineage by inhibiting the T-cell instructive Notch signaling pathway through the specific transcriptional repression of Notch downstream target genes. Also regulates osteoclast differentiation. May also play a role, independently of its transcriptional activity, in double-strand break repair via classical non-homologous end joining/cNHEJ. Recruited to double-strand break sites on damage DNA, interacts with the DNA-dependent protein kinase complex and directly regulates its stability and activity in DNA repair. May also modulate the splicing activity of KHDRBS1 toward BCL2L1 in a mechanism which is histone deacetylase-dependent and thereby negatively regulates the pro-apoptotic effect of KHDRBS1. The sequence is that of Zinc finger and BTB domain-containing protein 7A from Homo sapiens (Human).